A 216-amino-acid polypeptide reads, in one-letter code: Cytidylate kinase (216 aa).

10–18 (GPAAAGKST) serves as a coordination point for ATP.

Belongs to the cytidylate kinase family. Type 1 subfamily.

It is found in the cytoplasm. It catalyses the reaction CMP + ATP = CDP + ADP. The catalysed reaction is dCMP + ATP = dCDP + ADP. The sequence is that of Cytidylate kinase from Macrococcus caseolyticus (strain JCSC5402) (Macrococcoides caseolyticum).